A 301-amino-acid chain; its full sequence is Asialoglycoprotein receptor 2 (301 aa).

Residues M1–Q43 form a disordered region. The Cytoplasmic segment spans residues M1–R58. A Phosphoserine modification is found at S13. Basic and acidic residues predominate over residues N16 to H39. C54 carries the S-palmitoyl cysteine lipid modification. The chain crosses the membrane as a helical; Signal-anchor for type II membrane protein span at residues L59–S79. Topologically, residues Q80–H301 are extracellular. N-linked (GlcNAc...) asparagine glycosylation is found at N97 and N165. Positions C169–K295 constitute a C-type lectin domain. 3 disulfide bridges follow: C170-C181, C198-C293, and C271-C285. N298 carries an N-linked (GlcNAc...) asparagine glycan.

Interacts with LASS2. In terms of tissue distribution, expressed exclusively in hepatic parenchymal cells.

The protein localises to the membrane. Its function is as follows. Mediates the endocytosis of plasma glycoproteins to which the terminal sialic acid residue on their complex carbohydrate moieties has been removed. The receptor recognizes terminal galactose and N-acetylgalactosamine units. After ligand binding to the receptor, the resulting complex is internalized and transported to a sorting organelle, where receptor and ligand are disassociated. The receptor then returns to the cell membrane surface. The polypeptide is Asialoglycoprotein receptor 2 (Asgr2) (Mus musculus (Mouse)).